Consider the following 283-residue polypeptide: Pantothenate synthetase (283 aa).

26 to 33 (MGNLHDGH) is an ATP binding site. The active-site Proton donor is the His-33. Gln-57 is a (R)-pantoate binding site. Gln-57 is a beta-alanine binding site. ATP is bound at residue 148–151 (GKKD). (R)-pantoate is bound at residue Gln-154. ATP is bound by residues Ala-177 and 185–188 (LSSR).

Belongs to the pantothenate synthetase family. In terms of assembly, homodimer.

It localises to the cytoplasm. It catalyses the reaction (R)-pantoate + beta-alanine + ATP = (R)-pantothenate + AMP + diphosphate + H(+). It participates in cofactor biosynthesis; (R)-pantothenate biosynthesis; (R)-pantothenate from (R)-pantoate and beta-alanine: step 1/1. In terms of biological role, catalyzes the condensation of pantoate with beta-alanine in an ATP-dependent reaction via a pantoyl-adenylate intermediate. The chain is Pantothenate synthetase from Delftia acidovorans (strain DSM 14801 / SPH-1).